We begin with the raw amino-acid sequence, 384 residues long: O-phospho-L-seryl-tRNA:Cys-tRNA synthase 1 (384 aa).

Residues 88–89 (AR), Asn-195, and 218–220 (SGH) each bind pyridoxal 5'-phosphate. Lys-221 is modified (N6-(pyridoxal phosphate)lysine).

It belongs to the SepCysS family. Homodimer. Interacts with SepRS. It depends on pyridoxal 5'-phosphate as a cofactor.

The enzyme catalyses O-phospho-L-seryl-tRNA(Cys) + hydrogen sulfide + H(+) = L-cysteinyl-tRNA(Cys) + phosphate. In terms of biological role, converts O-phospho-L-seryl-tRNA(Cys) (Sep-tRNA(Cys)) to L-cysteinyl-tRNA(Cys) (Cys-tRNA(Cys)). In Methanocella arvoryzae (strain DSM 22066 / NBRC 105507 / MRE50), this protein is O-phospho-L-seryl-tRNA:Cys-tRNA synthase 1.